Here is a 628-residue protein sequence, read N- to C-terminus: MKNILSFSFSFSFLYILFLLLFLNNNLLIIKSCPTYPNPIKLNQNESLLIEAYNQIDELIQNNMKLNNVTSFIATIVYMDEIVWSKTYGNLNPLDDKSPPLTIDNNIKIASLTKVFTSLMMYQLRDNGKILSLDDKISNYFPKFKINDIYKLKSSGSGSKSGKSDIKDNSITFRQLASHQSGLPREVPCDSITYGTKNCTENIIFERLSKQFTLLKQYSEVHYSNLGFALLGKILGEIISNSTNNNNNNNNNNNNNNNNNNNNNNNNNNNNNNNNNNNNNNKIKTNDLISSNEQFQYENYILNNILKPLNMMNSTFNYDDIDSNNLALGYTILKNGTFEIVQRQNSGWNSPAGGLYSTARDISKFMIFWLNNGIISNNNNKNDNNNNNNENNDNLVKESTINEALLPVSLISDGLTAYGTPFEMWYDQQNNIWLKSKAGIANAYRTQMALIPPLKLGMFFSSQFVFDTPDLFTREVSQILIPVYEYLLNKKQEEKEEKEEEEENQQDESQQQQQQQQNNIKLLSNDIFIGNYLNEFGSIFNVFIDDSTGLLYCNFGNDFVYLISDFDDSYNFPHIKRISLLDPKKYICWPIVDGANEELIYFTFNDDDSRNSITCTGVQVLGQFLYKT.

An N-terminal signal peptide occupies residues 1-28 (MKNILSFSFSFSFLYILFLLLFLNNNLL). N-linked (GlcNAc...) asparagine glycans are attached at residues Asn45, Asn68, Asn198, and Asn241. Residues 245–281 (NNNNNNNNNNNNNNNNNNNNNNNNNNNNNNNNNNNNN) show a composition bias toward low complexity. The tract at residues 245–285 (NNNNNNNNNNNNNNNNNNNNNNNNNNNNNNNNNNNNNKIKT) is disordered. Residues Asn313 and Asn335 are each glycosylated (N-linked (GlcNAc...) asparagine). Residues 494 to 516 (EKEEKEEEEENQQDESQQQQQQQ) form a disordered region. Residues 496 to 506 (EEKEEEEENQQ) show a composition bias toward acidic residues. Residues 507–516 (DESQQQQQQQ) show a composition bias toward low complexity.

This sequence belongs to the beta-lactamase family.

The protein localises to the secreted. The protein is Beta-lactamase-like protein 1 of Dictyostelium discoideum (Social amoeba).